The primary structure comprises 209 residues: Small ribosomal subunit protein uS3 (209 aa).

The KH type-2 domain maps to 38–107 (IRKVIKNKYA…RFIVNVEEIK (70 aa)).

The protein belongs to the universal ribosomal protein uS3 family. As to quaternary structure, part of the 30S ribosomal subunit. Forms a tight complex with proteins S10 and S14.

In terms of biological role, binds the lower part of the 30S subunit head. Binds mRNA in the 70S ribosome, positioning it for translation. This Thermosipho africanus (strain TCF52B) protein is Small ribosomal subunit protein uS3.